A 585-amino-acid polypeptide reads, in one-letter code: Efflux pump dotC (585 aa).

Positions 1 to 34 (MSEDHTKADNLSEKDPHSPERSDSSSHEDAHARE) are enriched in basic and acidic residues. The segment at 1–45 (MSEDHTKADNLSEKDPHSPERSDSSSHEDAHAREEEESSDDDGAL) is disordered. The N-linked (GlcNAc...) asparagine glycan is linked to N10. Residues 35 to 44 (EEESSDDDGA) show a composition bias toward acidic residues. A helical membrane pass occupies residues 51-71 (SLIAIVMIALSLIGLQLAVFL). N91 is a glycosylation site (N-linked (GlcNAc...) asparagine). The next 13 helical transmembrane spans lie at 94–114 (AAYTWVGSAYLLANAASTPIW), 132–152 (ALFMIGSLVCALSINVGMLIT), 158–178 (GAAGGGLLTLVDTIIGDLFSL), 186–206 (GMIGGVWAIACALGPIVGGAF), 214–234 (WCFYINLPIDGLAFGIIFFFL), 247–267 (FAAIDWAGSFFIIGGTLMFLF), 280–300 (SATVICLLVFGVVCIVLFGLV), 323–343 (ALLVAFFHSFVFTSAFYYLPL), 353–373 (PILAGVYILPAVLSTGVSAAA), 385–405 (LIPMYFGMSMMILGYGLLINF), 414–434 (LIIYQLIAGIGNGPNFQAPLV), 449–471 (TATFNFVRNIATAISVVAGQVLY), and 524–544 (SPMWIMYTAFAAAGLFCILLV). A disordered region spans residues 564 to 585 (KKAEAERKAERQAKDLEKAQKS).

Belongs to the major facilitator superfamily. TCR/Tet family.

The protein localises to the cell membrane. Its subcellular location is the vacuole membrane. Functionally, efflux pump; part of the gene cluster that mediates the biosynthesis of dothistromin (DOTH), a polyketide toxin very similar in structure to the aflatoxin precursor, versicolorin B. One function of dotC may be to transport early-stage dothistromin biosynthetic intermediates from the cytoplasm into vacuoles, thereby affecting the rate of dothistromin production. This chain is Efflux pump dotC, found in Dothistroma septosporum (Red band needle blight fungus).